Consider the following 404-residue polypeptide: Transcription factor sem-2 (404 aa).

A DNA-binding region (HMG box) is located at residues 93 to 161 (IKRPMNAFMV…CHMQEYPDYK (69 aa)). 2 disordered regions span residues 158 to 218 (PDYK…QFQN) and 321 to 359 (HTSP…NSAG). Residues 177-199 (QQPAQPQAPQQQQAPPRGASPQA) are compositionally biased toward low complexity. 2 stretches are compositionally biased toward polar residues: residues 207-218 (TDQQSETQQFQN) and 347-359 (ASEQ…NSAG).

It is found in the nucleus. Probable transcription factor required for embryogenesis, vulval development and cell fate specification of the postembryonic mesoderm (also known as the M lineage). Specifically, required for the specification of sex myoblast cells and their development into the muscles that are necessary for egg-laying. In addition, may be involved in RME GABAergic motor neuron progenitor cell fate specification. In Caenorhabditis elegans, this protein is Transcription factor sem-2.